We begin with the raw amino-acid sequence, 251 residues long: tRNA (guanine-N(1)-)-methyltransferase (251 aa).

Residues glycine 117 and 137 to 142 (IGDYVL) contribute to the S-adenosyl-L-methionine site.

This sequence belongs to the RNA methyltransferase TrmD family. In terms of assembly, homodimer.

It is found in the cytoplasm. It carries out the reaction guanosine(37) in tRNA + S-adenosyl-L-methionine = N(1)-methylguanosine(37) in tRNA + S-adenosyl-L-homocysteine + H(+). Specifically methylates guanosine-37 in various tRNAs. This Actinobacillus pleuropneumoniae serotype 5b (strain L20) protein is tRNA (guanine-N(1)-)-methyltransferase.